The following is a 323-amino-acid chain: GTP 3',8-cyclase (323 aa).

The 230-residue stretch at 4–233 (KYGREIDYLR…NGPAKYISIE (230 aa)) folds into the Radical SAM core domain. Residue Arg-13 coordinates GTP. Residues Cys-20 and Cys-24 each contribute to the [4Fe-4S] cluster site. S-adenosyl-L-methionine is bound at residue Tyr-26. A [4Fe-4S] cluster-binding site is contributed by Cys-27. Position 63 (Arg-63) interacts with GTP. Gly-67 is a binding site for S-adenosyl-L-methionine. Thr-94 serves as a coordination point for GTP. Ser-118 contributes to the S-adenosyl-L-methionine binding site. A GTP-binding site is contributed by Lys-154. Met-188 contributes to the S-adenosyl-L-methionine binding site. Positions 250 and 253 each coordinate [4Fe-4S] cluster. 255-257 (RIR) contributes to the GTP binding site. Cys-267 serves as a coordination point for [4Fe-4S] cluster.

Belongs to the radical SAM superfamily. MoaA family. Monomer and homodimer. [4Fe-4S] cluster is required as a cofactor.

The catalysed reaction is GTP + AH2 + S-adenosyl-L-methionine = (8S)-3',8-cyclo-7,8-dihydroguanosine 5'-triphosphate + 5'-deoxyadenosine + L-methionine + A + H(+). It participates in cofactor biosynthesis; molybdopterin biosynthesis. In terms of biological role, catalyzes the cyclization of GTP to (8S)-3',8-cyclo-7,8-dihydroguanosine 5'-triphosphate. This chain is GTP 3',8-cyclase, found in Clostridium perfringens (strain 13 / Type A).